A 210-amino-acid chain; its full sequence is Orotate phosphoribosyltransferase (210 aa).

5-phospho-alpha-D-ribose 1-diphosphate-binding positions include Arg-94, Lys-98, His-100, and 120 to 128 (EDLISTGGS). Ser-124 contributes to the orotate binding site.

This sequence belongs to the purine/pyrimidine phosphoribosyltransferase family. PyrE subfamily. In terms of assembly, homodimer. Mg(2+) is required as a cofactor.

It catalyses the reaction orotidine 5'-phosphate + diphosphate = orotate + 5-phospho-alpha-D-ribose 1-diphosphate. It participates in pyrimidine metabolism; UMP biosynthesis via de novo pathway; UMP from orotate: step 1/2. Functionally, catalyzes the transfer of a ribosyl phosphate group from 5-phosphoribose 1-diphosphate to orotate, leading to the formation of orotidine monophosphate (OMP). This is Orotate phosphoribosyltransferase from Bacillus cereus (strain G9842).